A 337-amino-acid chain; its full sequence is tRNA N6-adenosine threonylcarbamoyltransferase (337 aa).

His111 and His115 together coordinate Fe cation. Substrate-binding positions include 134–138 (LVSGG), Asp167, Gly180, and Asn272. Asp300 is a binding site for Fe cation.

This sequence belongs to the KAE1 / TsaD family. The cofactor is Fe(2+).

It localises to the cytoplasm. The enzyme catalyses L-threonylcarbamoyladenylate + adenosine(37) in tRNA = N(6)-L-threonylcarbamoyladenosine(37) in tRNA + AMP + H(+). Required for the formation of a threonylcarbamoyl group on adenosine at position 37 (t(6)A37) in tRNAs that read codons beginning with adenine. Is involved in the transfer of the threonylcarbamoyl moiety of threonylcarbamoyl-AMP (TC-AMP) to the N6 group of A37, together with TsaE and TsaB. TsaD likely plays a direct catalytic role in this reaction. This is tRNA N6-adenosine threonylcarbamoyltransferase from Salmonella agona (strain SL483).